The chain runs to 288 residues: Pyridoxal kinase PdxY (288 aa).

Substrate-binding positions include Ser12 and 47-48; that span reads TQ. ATP contacts are provided by residues Asp114, Glu151, Lys184, and 211 to 214; that span reads RPLL. Position 225 (Asp225) interacts with substrate.

Belongs to the pyridoxine kinase family. PdxY subfamily. Homodimer. Mg(2+) is required as a cofactor.

The catalysed reaction is pyridoxal + ATP = pyridoxal 5'-phosphate + ADP + H(+). The protein operates within cofactor metabolism; pyridoxal 5'-phosphate salvage; pyridoxal 5'-phosphate from pyridoxal: step 1/1. In terms of biological role, pyridoxal kinase involved in the salvage pathway of pyridoxal 5'-phosphate (PLP). Catalyzes the phosphorylation of pyridoxal to PLP. The sequence is that of Pyridoxal kinase PdxY from Pseudomonas paraeruginosa (strain DSM 24068 / PA7) (Pseudomonas aeruginosa (strain PA7)).